We begin with the raw amino-acid sequence, 137 residues long: 15.7 kDa heat shock protein, peroxisomal (137 aa).

The region spanning glutamine 15–threonine 134 is the sHSP domain. The Microbody targeting signal motif lies at serine 135 to leucine 137.

It belongs to the small heat shock protein (HSP20) family. May form oligomeric structures.

The protein localises to the peroxisome. Its function is as follows. Possesses chaperone activity. This chain is 15.7 kDa heat shock protein, peroxisomal (HSP15.7), found in Arabidopsis thaliana (Mouse-ear cress).